A 170-amino-acid chain; its full sequence is MARVEL domain-containing protein 1 (170 aa).

Residues Met-1–Pro-38 lie on the Cytoplasmic side of the membrane. Positions Phe-34–Arg-167 constitute an MARVEL domain. Residues Thr-39–Gly-59 traverse the membrane as a helical segment. Over Ser-60–Ala-67 the chain is Extracellular. The helical transmembrane segment at Phe-68–Leu-88 threads the bilayer. Residues His-89–Trp-102 are Cytoplasmic-facing. A helical transmembrane segment spans residues Ser-103–Val-123. Over Glu-124–Ser-145 the chain is Extracellular. Residues Phe-146–Trp-166 traverse the membrane as a helical segment. At Arg-167–Ser-170 the chain is on the cytoplasmic side.

The protein resides in the membrane. Its subcellular location is the nucleus. This chain is MARVEL domain-containing protein 1 (marveld1), found in Xenopus laevis (African clawed frog).